Here is a 1137-residue protein sequence, read N- to C-terminus: Phytochrome C (1137 aa).

The segment covering 1–18 (MSSSRSNNRATCSRSSSA) has biased composition (low complexity). Residues 1–27 (MSSSRSNNRATCSRSSSARSKHSARVV) form a disordered region. The region spanning 217-400 (NLSLLCDVLV…VFGIQINKEV (184 aa)) is the GAF domain. Cys322 contacts phytochromobilin. PAS domains lie at 620–690 (VTNE…LQGI) and 750–824 (IQGD…TKLS). Residues 904-1124 (YIRQELRNPL…IVLVEFPVAQ (221 aa)) form the Histidine kinase domain.

It belongs to the phytochrome family. As to quaternary structure, homodimer. Post-translationally, contains one covalently linked phytochromobilin chromophore.

In terms of biological role, regulatory photoreceptor which exists in two forms that are reversibly interconvertible by light: the Pr form that absorbs maximally in the red region of the spectrum and the Pfr form that absorbs maximally in the far-red region. Photoconversion of Pr to Pfr induces an array of morphogenic responses, whereas reconversion of Pfr to Pr cancels the induction of those responses. Pfr controls the expression of a number of nuclear genes including those encoding the small subunit of ribulose-bisphosphate carboxylase, chlorophyll A/B binding protein, protochlorophyllide reductase, rRNA, etc. It also controls the expression of its own gene(s) in a negative feedback fashion. This is Phytochrome C (PHYC) from Oryza sativa subsp. indica (Rice).